The following is a 264-amino-acid chain: Virulence plasmid ParA family protein pGP5-D (264 aa).

An ATP-binding site is contributed by phenylalanine 9–threonine 16.

The protein belongs to the ParA family.

Its function is as follows. Required for growth within mammalian cells. The protein is Virulence plasmid ParA family protein pGP5-D of Chlamydia trachomatis.